The primary structure comprises 449 residues: Phosphoglucosamine mutase (449 aa).

The active-site Phosphoserine intermediate is the S101. 4 residues coordinate Mg(2+): S101, D243, D245, and D247. S101 carries the phosphoserine modification.

The protein belongs to the phosphohexose mutase family. It depends on Mg(2+) as a cofactor. Post-translationally, activated by phosphorylation.

It catalyses the reaction alpha-D-glucosamine 1-phosphate = D-glucosamine 6-phosphate. In terms of biological role, catalyzes the conversion of glucosamine-6-phosphate to glucosamine-1-phosphate. The chain is Phosphoglucosamine mutase from Syntrophus aciditrophicus (strain SB).